A 557-amino-acid polypeptide reads, in one-letter code: GMP synthase [glutamine-hydrolyzing] (557 aa).

The region spanning Thr13–Asn209 is the Glutamine amidotransferase type-1 domain. The active-site Nucleophile is the Cys89. Active-site residues include His183 and Glu185. One can recognise a GMPS ATP-PPase domain in the interval Trp210–Arg414. Ser238–Thr244 is an ATP binding site. XMP is bound by residues Arg311, Asp476, Lys549, and Glu555.

Homodimer. The cofactor is Mg(2+).

It localises to the cytoplasm. The protein resides in the cytosol. The catalysed reaction is XMP + L-glutamine + ATP + H2O = GMP + L-glutamate + AMP + diphosphate + 2 H(+). It participates in purine metabolism; GMP biosynthesis; GMP from XMP (L-Gln route): step 1/1. Inhibited by 6-diazo-5-oxo-l-norleucine (DON) and acivicin (ACI). Functionally, catalyzes the conversion of xanthine monophosphate (XMP) to GMP in the presence of glutamine and ATP through an adenyl-XMP intermediate. This chain is GMP synthase [glutamine-hydrolyzing] (gua1), found in Aspergillus fumigatus (strain ATCC MYA-4609 / CBS 101355 / FGSC A1100 / Af293) (Neosartorya fumigata).